Reading from the N-terminus, the 153-residue chain is Aminoglycoside N(6')-acetyltransferase type 1 (153 aa).

The region spanning 6 to 153 is the N-acetyltransferase domain; the sequence is PTIRQATPAD…YFRMPLEPSA (148 aa). Substrate is bound by residues W27, Y70, E83, D119, and E140.

In terms of assembly, homodimer.

It carries out the reaction kanamycin B + acetyl-CoA = N(6')-acetylkanamycin B + CoA + H(+). Its function is as follows. Catalyzes the transfer of an acetyl group from acetyl-CoA to the 6'-amino group of aminoglycoside molecules conferring resistance to antibiotics containing the purpurosamine ring including amikacin, gentamicin, kanamycin B, tobramycin, netilmicin, and isepamicin. The polypeptide is Aminoglycoside N(6')-acetyltransferase type 1 (Stenotrophomonas maltophilia (Pseudomonas maltophilia)).